We begin with the raw amino-acid sequence, 471 residues long: Protein translocase subunit SecF (471 aa).

The interval 1–29 is disordered; the sequence is MVSRAKVGAETTKGIDEPDRNDNTDDNGA. Basic and acidic residues predominate over residues 13–23; it reads KGIDEPDRNDN. 6 helical membrane passes run 88 to 108, 211 to 231, 242 to 262, 267 to 287, 325 to 345, and 355 to 375; these read GGVI…TFGI, ITKK…LYIT, ALTT…LVGF, ATVI…VIVF, LISV…LGVG, and LVGI…LLVT. Residues 393–471 form a disordered region; sequence RRTLGSQVGK…TGKRNNVGRR (79 aa). Residues 415 to 431 show a composition bias toward polar residues; sequence KPQNQAESCADASSQEG. The span at 448–460 shows a compositional bias: low complexity; sequence PGVRPVRPTGTRR. Basic residues predominate over residues 461–471; sequence PTGKRNNVGRR.

Belongs to the SecD/SecF family. SecF subfamily. In terms of assembly, forms a complex with SecD. Part of the essential Sec protein translocation apparatus which comprises SecA, SecYEG and auxiliary proteins SecDF. Other proteins may also be involved.

It is found in the cell membrane. Part of the Sec protein translocase complex. Interacts with the SecYEG preprotein conducting channel. SecDF uses the proton motive force (PMF) to complete protein translocation after the ATP-dependent function of SecA. In Mycobacterium leprae (strain TN), this protein is Protein translocase subunit SecF.